We begin with the raw amino-acid sequence, 187 residues long: Probable cobalt-precorrin-6B C(15)-methyltransferase (decarboxylating) (187 aa).

Residues Thr15, 39–43, Glu60, and Ala89 each bind S-adenosyl-L-methionine; that span reads GSCTG.

Belongs to the methyltransferase superfamily. Archaeal-type CbiT family.

It carries out the reaction Co-precorrin-6B + S-adenosyl-L-methionine = Co-precorrin-7 + S-adenosyl-L-homocysteine + CO2. The protein operates within cofactor biosynthesis; adenosylcobalamin biosynthesis; cob(II)yrinate a,c-diamide from sirohydrochlorin (anaerobic route): step 8/10. Its function is as follows. Catalyzes the methylation of C-15 in cobalt-precorrin-6B followed by the decarboxylation of C-12 to form cobalt-precorrin-7. The polypeptide is Probable cobalt-precorrin-6B C(15)-methyltransferase (decarboxylating) (Halobacterium salinarum (strain ATCC 700922 / JCM 11081 / NRC-1) (Halobacterium halobium)).